We begin with the raw amino-acid sequence, 302 residues long: MTSNEKEMGKSELLVVTGMSGAGKSLVIQSLEDMGFFCVDNLPPVLLPKFVELMAQGNPSLQKVAIAIDLRGKELFKSLVKEIDIIKSRNDVILDVMFLEAKTEKIISRYKESRRAHPLNEQGQRSLIDAINEEREHLSEIRSIANYVIDTTKLKPKELKQRISKFYLDENFETFTINVTSFGFKHGIQMDADLVFDVRFLPNPYYVEELRPFTGLDEPVYNYVMKWKETQIFFDKLTDLLKFMIPGYKKEGKSQLVIAIGCTGGQHRSVALAKRLAEYLNEIFEYNVYVHHRDAHIESGER.

Residue 18–25 (GMSGAGKS) coordinates ATP. 69–72 (DLRG) contributes to the GTP binding site.

This sequence belongs to the RapZ-like family.

Displays ATPase and GTPase activities. The protein is Nucleotide-binding protein SE_0548 of Staphylococcus epidermidis (strain ATCC 12228 / FDA PCI 1200).